The primary structure comprises 260 residues: 1-(5-phosphoribosyl)-5-[(5-phosphoribosylamino)methylideneamino] imidazole-4-carboxamide isomerase (260 aa).

The active-site Proton acceptor is aspartate 8. Aspartate 130 acts as the Proton donor in catalysis.

The protein belongs to the HisA/HisF family.

It is found in the cytoplasm. The enzyme catalyses 1-(5-phospho-beta-D-ribosyl)-5-[(5-phospho-beta-D-ribosylamino)methylideneamino]imidazole-4-carboxamide = 5-[(5-phospho-1-deoxy-D-ribulos-1-ylimino)methylamino]-1-(5-phospho-beta-D-ribosyl)imidazole-4-carboxamide. It functions in the pathway amino-acid biosynthesis; L-histidine biosynthesis; L-histidine from 5-phospho-alpha-D-ribose 1-diphosphate: step 4/9. The polypeptide is 1-(5-phosphoribosyl)-5-[(5-phosphoribosylamino)methylideneamino] imidazole-4-carboxamide isomerase (Chlorobaculum parvum (strain DSM 263 / NCIMB 8327) (Chlorobium vibrioforme subsp. thiosulfatophilum)).